Reading from the N-terminus, the 943-residue chain is Isoleucine--tRNA ligase (943 aa).

The short motif at 58–68 (PYANGKIHIGH) is the 'HIGH' region element. Residue Glu-567 participates in L-isoleucyl-5'-AMP binding. The short motif at 608 to 612 (KMSKS) is the 'KMSKS' region element. Position 611 (Lys-611) interacts with ATP. The Zn(2+) site is built by Cys-906, Cys-909, Cys-926, and Cys-929.

It belongs to the class-I aminoacyl-tRNA synthetase family. IleS type 1 subfamily. Monomer. The cofactor is Zn(2+).

The protein resides in the cytoplasm. It carries out the reaction tRNA(Ile) + L-isoleucine + ATP = L-isoleucyl-tRNA(Ile) + AMP + diphosphate. Its function is as follows. Catalyzes the attachment of isoleucine to tRNA(Ile). As IleRS can inadvertently accommodate and process structurally similar amino acids such as valine, to avoid such errors it has two additional distinct tRNA(Ile)-dependent editing activities. One activity is designated as 'pretransfer' editing and involves the hydrolysis of activated Val-AMP. The other activity is designated 'posttransfer' editing and involves deacylation of mischarged Val-tRNA(Ile). The protein is Isoleucine--tRNA ligase of Pseudomonas putida (strain ATCC 47054 / DSM 6125 / CFBP 8728 / NCIMB 11950 / KT2440).